Reading from the N-terminus, the 564-residue chain is Putative zinc metalloproteinase in scaA 5'region (564 aa).

A Peptidase M13 domain is found at 1–564; it reads MTRLQDDFYD…KEADFSAEEF (564 aa). His-478 contacts Zn(2+). Glu-479 is a catalytic residue. Zn(2+) is bound by residues His-482 and Glu-538. Asp-542 functions as the Proton donor in the catalytic mechanism.

This sequence belongs to the peptidase M13 family. Requires Zn(2+) as cofactor.

This Streptococcus gordonii (strain Challis / ATCC 35105 / BCRC 15272 / CH1 / DL1 / V288) protein is Putative zinc metalloproteinase in scaA 5'region.